Consider the following 336-residue polypeptide: Pentalenene synthase (336 aa).

D80, D84, N219, S223, and E227 together coordinate Mg(2+). Positions 80 to 84 (DDLFD) match the DDXXD motif motif.

This sequence belongs to the terpene synthase family. Monomer. Requires Mg(2+) as cofactor.

The enzyme catalyses (2E,6E)-farnesyl diphosphate = pentalenene + diphosphate. It participates in antibiotic biosynthesis; neopentalenolactone biosynthesis. In terms of biological role, catalyzes the cyclization of farnesyl diphosphate (FPP) to the tricyclic sesquiterpene pentalenene in the biosynthesis of neopentalenolactone antibiotic. The polypeptide is Pentalenene synthase (ptlA) (Streptomyces avermitilis (strain ATCC 31267 / DSM 46492 / JCM 5070 / NBRC 14893 / NCIMB 12804 / NRRL 8165 / MA-4680)).